The sequence spans 1370 residues: DNA-directed RNA polymerase subunit beta (1370 aa).

The protein belongs to the RNA polymerase beta chain family. The RNAP catalytic core consists of 2 alpha, 1 beta, 1 beta' and 1 omega subunit. When a sigma factor is associated with the core the holoenzyme is formed, which can initiate transcription.

The enzyme catalyses RNA(n) + a ribonucleoside 5'-triphosphate = RNA(n+1) + diphosphate. DNA-dependent RNA polymerase catalyzes the transcription of DNA into RNA using the four ribonucleoside triphosphates as substrates. This Geobacter sulfurreducens (strain ATCC 51573 / DSM 12127 / PCA) protein is DNA-directed RNA polymerase subunit beta.